An 852-amino-acid polypeptide reads, in one-letter code: Pentatricopeptide repeat-containing protein At5g02830, chloroplastic (852 aa).

Residues 1–25 constitute a chloroplast transit peptide; it reads MRDFVIVFGSSSAITNPHHHHRRCY. The tract at residues 17–60 is disordered; sequence PHHHHRRCYATAPESNRKTKSNSSFTKLLPSLPQQHSPSPASVS. Low complexity predominate over residues 44 to 58; that stretch reads LLPSLPQQHSPSPAS. 8 PPR repeats span residues 334–364, 373–407, 408–442, 443–477, 525–557, 558–592, 593–627, and 628–665; these read DMTS…AKRM, DAFT…GVTP, NTHT…GCEP, NSQC…SVNE, TTAT…GLSP, NQIT…GTRP, DVVA…QIKP, and NWVT…GYKP.

Belongs to the PPR family. P subfamily.

The protein resides in the plastid. It is found in the chloroplast. This is Pentatricopeptide repeat-containing protein At5g02830, chloroplastic from Arabidopsis thaliana (Mouse-ear cress).